A 255-amino-acid chain; its full sequence is Pre-miRNA 5'-monophosphate methyltransferase (255 aa).

Residues Arg32, Asn66, Asp96, 121-122 (DI), and Met150 contribute to the S-adenosyl-L-methionine site. Residues 41-253 (LHKLFRKPAE…SLLLFKIQRH (213 aa)) enclose the Bin3-type SAM domain.

The protein belongs to the methyltransferase superfamily.

The protein localises to the cytoplasm. It carries out the reaction a 5'-end 5'-phospho-ribonucleoside-RNA + S-adenosyl-L-methionine = a 5'-end (5'-methylphospho)-ribonucleoside-RNA + S-adenosyl-L-homocysteine. It catalyses the reaction a 5'-end 5'-phospho-ribonucleoside-RNA + 2 S-adenosyl-L-methionine = a 5'-end (5'-bismethylphospho)-ribonucleoside-RNA + 2 S-adenosyl-L-homocysteine. O-methyltransferase that specifically monomethylates 5'-monophosphate of cytoplasmic histidyl tRNA (tRNA(His)), acting as a capping enzyme by protecting tRNA(His) from cleavage by DICER1. Also able, with less efficiently, to methylate the 5' monophosphate of a subset of pre-miRNAs, acting as a negative regulator of miRNA processing. The 5' monophosphate of pre-miRNAs is recognized by DICER1 and is required for pre-miRNAs processing: methylation at this position reduces the processing of pre-miRNAs by DICER1. Was also reported to mediate dimethylation of pre-miR-145; however dimethylation cannot be reproduced by another group which observes a monomethylation of pre-miR-145. This chain is Pre-miRNA 5'-monophosphate methyltransferase (bcdin3d), found in Xenopus laevis (African clawed frog).